Consider the following 181-residue polypeptide: ATP-dependent protease subunit HslV (181 aa).

Thr-9 is an active-site residue. The Na(+) site is built by Ala-166, Cys-169, and Thr-172.

The protein belongs to the peptidase T1B family. HslV subfamily. A double ring-shaped homohexamer of HslV is capped on each side by a ring-shaped HslU homohexamer. The assembly of the HslU/HslV complex is dependent on binding of ATP.

The protein localises to the cytoplasm. The enzyme catalyses ATP-dependent cleavage of peptide bonds with broad specificity.. Its activity is regulated as follows. Allosterically activated by HslU binding. Functionally, protease subunit of a proteasome-like degradation complex believed to be a general protein degrading machinery. The sequence is that of ATP-dependent protease subunit HslV from Staphylococcus aureus (strain bovine RF122 / ET3-1).